The sequence spans 476 residues: Aspartyl/glutamyl-tRNA(Asn/Gln) amidotransferase subunit B (476 aa).

Belongs to the GatB/GatE family. GatB subfamily. In terms of assembly, heterotrimer of A, B and C subunits.

It catalyses the reaction L-glutamyl-tRNA(Gln) + L-glutamine + ATP + H2O = L-glutaminyl-tRNA(Gln) + L-glutamate + ADP + phosphate + H(+). The catalysed reaction is L-aspartyl-tRNA(Asn) + L-glutamine + ATP + H2O = L-asparaginyl-tRNA(Asn) + L-glutamate + ADP + phosphate + 2 H(+). Allows the formation of correctly charged Asn-tRNA(Asn) or Gln-tRNA(Gln) through the transamidation of misacylated Asp-tRNA(Asn) or Glu-tRNA(Gln) in organisms which lack either or both of asparaginyl-tRNA or glutaminyl-tRNA synthetases. The reaction takes place in the presence of glutamine and ATP through an activated phospho-Asp-tRNA(Asn) or phospho-Glu-tRNA(Gln). In Lacticaseibacillus casei (strain BL23) (Lactobacillus casei), this protein is Aspartyl/glutamyl-tRNA(Asn/Gln) amidotransferase subunit B.